The following is a 492-amino-acid chain: Probable cytochrome P450 313a3 (492 aa).

Residue Cys-438 participates in heme binding.

It belongs to the cytochrome P450 family. Heme is required as a cofactor.

It is found in the endoplasmic reticulum membrane. Its subcellular location is the microsome membrane. In terms of biological role, may be involved in the metabolism of insect hormones and in the breakdown of synthetic insecticides. This is Probable cytochrome P450 313a3 (Cyp313a3) from Drosophila melanogaster (Fruit fly).